The chain runs to 421 residues: 4-hydroxy-3-methylbut-2-en-1-yl diphosphate synthase (flavodoxin) (421 aa).

[4Fe-4S] cluster-binding residues include cysteine 300, cysteine 303, cysteine 346, and glutamate 353.

Belongs to the IspG family. It depends on [4Fe-4S] cluster as a cofactor.

The enzyme catalyses (2E)-4-hydroxy-3-methylbut-2-enyl diphosphate + oxidized [flavodoxin] + H2O + 2 H(+) = 2-C-methyl-D-erythritol 2,4-cyclic diphosphate + reduced [flavodoxin]. It functions in the pathway isoprenoid biosynthesis; isopentenyl diphosphate biosynthesis via DXP pathway; isopentenyl diphosphate from 1-deoxy-D-xylulose 5-phosphate: step 5/6. In terms of biological role, converts 2C-methyl-D-erythritol 2,4-cyclodiphosphate (ME-2,4cPP) into 1-hydroxy-2-methyl-2-(E)-butenyl 4-diphosphate. This Laribacter hongkongensis (strain HLHK9) protein is 4-hydroxy-3-methylbut-2-en-1-yl diphosphate synthase (flavodoxin).